The chain runs to 122 residues: Large ribosomal subunit protein uL14 (122 aa).

It belongs to the universal ribosomal protein uL14 family. In terms of assembly, part of the 50S ribosomal subunit. Forms a cluster with proteins L3 and L19. In the 70S ribosome, L14 and L19 interact and together make contacts with the 16S rRNA in bridges B5 and B8.

In terms of biological role, binds to 23S rRNA. Forms part of two intersubunit bridges in the 70S ribosome. The chain is Large ribosomal subunit protein uL14 from Lactococcus lactis subsp. lactis (strain IL1403) (Streptococcus lactis).